The primary structure comprises 425 residues: MLDIRQIRENPQIVQELLKRRGEYDLQPIIELDEKQRQLETERSQLQARSNQVGKQVGEKIKSGSDPKGTEIKALKEEGNKVKAKLSELEPEEKELKAKIEALLLPLPNLPSESTPIGKSEAENIEVKRWGDEYIPQNPKIIPHYEIGEKLGIMDFERGVKIAQSRFVALMGAGAALERAIIQFMLKRHIQVGYVEVMAPLLVNSQSLTATGQLPKFAEESFKCAADDLWLIPTSEVSTMNLYRDEILSAEQLPIYHCAFTPCFRREAGAYGKDTRGLIRLHQFNKVEMVKIVHPETSEEEHQKLVADAEAILQALKLPYRILELCSGDLGFSAAKCYDLEVWLPSSGTYREISSCSNVKDFQARRANIRFKERNKKGTQYVHALNGSGLAVGRTMAAILENYQQVDGSVKVPEVLQPYMGREFL.

The segment at 41 to 70 is disordered; it reads TERSQLQARSNQVGKQVGEKIKSGSDPKGT. The segment covering 44–54 has biased composition (polar residues); that stretch reads SQLQARSNQVG. Over residues 57-70 the composition is skewed to basic and acidic residues; it reads VGEKIKSGSDPKGT. Residue 234-236 participates in L-serine binding; sequence TSE. An ATP-binding site is contributed by 265 to 267; the sequence is RRE. Glutamate 288 serves as a coordination point for L-serine. 352–355 provides a ligand contact to ATP; it reads EISS. Serine 388 lines the L-serine pocket.

This sequence belongs to the class-II aminoacyl-tRNA synthetase family. Type-1 seryl-tRNA synthetase subfamily. In terms of assembly, homodimer. The tRNA molecule binds across the dimer.

The protein resides in the cytoplasm. It carries out the reaction tRNA(Ser) + L-serine + ATP = L-seryl-tRNA(Ser) + AMP + diphosphate + H(+). The enzyme catalyses tRNA(Sec) + L-serine + ATP = L-seryl-tRNA(Sec) + AMP + diphosphate + H(+). The protein operates within aminoacyl-tRNA biosynthesis; selenocysteinyl-tRNA(Sec) biosynthesis; L-seryl-tRNA(Sec) from L-serine and tRNA(Sec): step 1/1. Its function is as follows. Catalyzes the attachment of serine to tRNA(Ser). Is also able to aminoacylate tRNA(Sec) with serine, to form the misacylated tRNA L-seryl-tRNA(Sec), which will be further converted into selenocysteinyl-tRNA(Sec). This chain is Serine--tRNA ligase, found in Trichodesmium erythraeum (strain IMS101).